Consider the following 1363-residue polypeptide: ABC multidrug transporter MDR2 (1363 aa).

A helical membrane pass occupies residues 65–85; it reads IALIVIGTIAGIGAGIPFPLL. The region spanning 69–367 is the ABC transmembrane type-1 1 domain; that stretch reads VIGTIAGIGA…MAPFMHIFAS (299 aa). The N-linked (GlcNAc...) asparagine glycan is linked to asparagine 97. Helical transmembrane passes span 119–139, 193–213, 215–235, 301–321, and 336–356; these read VLQV…HTGC, KVGL…VAFL, VATI…MAFG, IQFG…FWQG, and VSVG…FVLS. Residues 403 to 682 enclose the ABC transporter 1 domain; that stretch reads IELQDVTFNY…DGVYAGMVRL (280 aa). 438–445 serves as a coordination point for ATP; sequence GTSGSGKS. Residues asparagine 552 and asparagine 633 are each glycosylated (N-linked (GlcNAc...) asparagine). Residues 738 to 758 are disordered; it reads YMPEEADSLPTEPENEKEKPK. 3 helical membrane-spanning segments follow: residues 781 to 801, 820 to 840, and 896 to 916; these read LGLI…VIFG, GMLF…AVIV, and LTGT…AGVI. Residues 781–1052 form the ABC transmembrane type-1 2 domain; the sequence is LGLITSIMIG…MFALVPDISK (272 aa). Asparagine 973 is a glycosylation site (N-linked (GlcNAc...) asparagine). 2 consecutive transmembrane segments (helical) span residues 992-1012 and 1016-1036; these read FWLS…YWWG and ILAG…LLFS. The ABC transporter 2 domain maps to 1119 to 1358; sequence VQFRNVHFRY…CESYRANVIH (240 aa). Position 1154-1161 (1154-1161) interacts with ATP; that stretch reads GPSGSGKS.

This sequence belongs to the ABC transporter superfamily. ABCB family. Multidrug resistance exporter (TC 3.A.1.201) subfamily.

Its subcellular location is the cell membrane. Pleiotropic ABC efflux transporter that may be involved in the modulation susceptibility to a wide range of unrelated cytotoxic compounds. In Trichophyton tonsurans (strain CBS 112818) (Scalp ringworm fungus), this protein is ABC multidrug transporter MDR2.